The following is a 264-amino-acid chain: Thymidylate synthase (264 aa).

R21 serves as a coordination point for dUMP. H51 provides a ligand contact to (6R)-5,10-methylene-5,6,7,8-tetrahydrofolate. 126–127 (RR) lines the dUMP pocket. The active-site Nucleophile is C146. DUMP-binding positions include 166–169 (RSAD), N177, and 207–209 (HLY). D169 contributes to the (6R)-5,10-methylene-5,6,7,8-tetrahydrofolate binding site. A263 provides a ligand contact to (6R)-5,10-methylene-5,6,7,8-tetrahydrofolate.

Belongs to the thymidylate synthase family. Bacterial-type ThyA subfamily. In terms of assembly, homodimer.

The protein localises to the cytoplasm. It catalyses the reaction dUMP + (6R)-5,10-methylene-5,6,7,8-tetrahydrofolate = 7,8-dihydrofolate + dTMP. It participates in pyrimidine metabolism; dTTP biosynthesis. In terms of biological role, catalyzes the reductive methylation of 2'-deoxyuridine-5'-monophosphate (dUMP) to 2'-deoxythymidine-5'-monophosphate (dTMP) while utilizing 5,10-methylenetetrahydrofolate (mTHF) as the methyl donor and reductant in the reaction, yielding dihydrofolate (DHF) as a by-product. This enzymatic reaction provides an intracellular de novo source of dTMP, an essential precursor for DNA biosynthesis. This is Thymidylate synthase from Azoarcus sp. (strain BH72).